Here is a 335-residue protein sequence, read N- to C-terminus: MFPTMLKIFPILATLAGHVHGVVVTVPEKTVNVKTGGNATLLCTYTSSQPLGNFFIQWSFYSAKESQLHTIYYYSEGQSYSYGEFKDRITAATSPGNASITISNMQPSDTGSYTCEVFSPQDDAGQSQKSVIVNVLVKPSKPFCKIEGTPEKGHLIYLLCKCDQGLPHPTYRWYKVDENTLTPVTEYFNPDTGILYIGNLTTFETGHYRCIASNIMGNSTCELDLTSMHSDGNIVAGALIGAILAAVIICAIVWVLTKKAKKKKSSSNEMQVMAQKQSNAEYAQVPNEENTPATAVLPSNATNEQPSADEAAAPETPENDEKHEVQKEETAGSSF.

Positions 1-21 (MFPTMLKIFPILATLAGHVHG) are cleaved as a signal peptide. In terms of domain architecture, Ig-like V-type spans 22-136 (VVVTVPEKTV…SQKSVIVNVL (115 aa)). The Extracellular segment spans residues 22–233 (VVVTVPEKTV…DLTSMHSDGN (212 aa)). Cystine bridges form between cysteine 43–cysteine 115 and cysteine 160–cysteine 210. The Ig-like C2-type domain occupies 139–226 (PSKPFCKIEG…GNSTCELDLT (88 aa)). Residues 234-254 (IVAGALIGAILAAVIICAIVW) traverse the membrane as a helical segment. The Cytoplasmic portion of the chain corresponds to 255 to 335 (VLTKKAKKKK…QKEETAGSSF (81 aa)). The disordered stretch occupies residues 266–335 (SSNEMQVMAQ…QKEETAGSSF (70 aa)). Over residues 268 to 306 (NEMQVMAQKQSNAEYAQVPNEENTPATAVLPSNATNEQP) the composition is skewed to polar residues. Positions 319-335 (NDEKHEVQKEETAGSSF) are enriched in basic and acidic residues.

As to expression, expressed in thymocytes.

Its subcellular location is the membrane. The sequence is that of V-set and immunoglobulin domain-containing protein 1 (VSIG1) from Gallus gallus (Chicken).